The following is a 341-amino-acid chain: Protein YIPF3 (341 aa).

Residues 1-146 are Cytoplasmic-facing; it reads MANSSGSSRN…PVKMISFPQK (146 aa). The segment at 26–46 is disordered; it reads GGGAAVIDMENMDDTSGSSFE. A helical membrane pass occupies residues 147–167; the sequence is IAGELYGPLMLVFTMVAILLH. Topologically, residues 168-185 are lumenal; sequence GMKSSGTIIREGTLMGTA. The helical transmembrane segment at 186 to 206 threads the bilayer; the sequence is IGTCFGYWLGVSSFIYFLAYL. At 207 to 212 the chain is on the cytoplasmic side; sequence CNAQIT. A helical membrane pass occupies residues 213-233; the sequence is MLQTLSLLGYGLFGHCIVLFI. The Lumenal segment spans residues 234 to 242; that stretch reads TYNIHFHSL. The helical transmembrane segment at 243 to 263 threads the bilayer; it reads FYIFWLCIGGLSTLRMVAVLL. Residues 264–272 are Cytoplasmic-facing; sequence SRTVGHTQR. The chain crosses the membrane as a helical span at residues 273 to 293; it reads LIVCGTMAALHMLFLLYLHFA. The Lumenal portion of the chain corresponds to 294 to 341; that stretch reads YHKVVEGILDTLDGQNVPLPIQRVARDLPVGPNTVLNATVQVLLAHSR. Asn330 carries an N-linked (GlcNAc...) asparagine glycan.

This sequence belongs to the YIP1 family.

Its subcellular location is the cell membrane. It is found in the golgi apparatus. It localises to the cis-Golgi network membrane. The protein resides in the cytoplasm. Functionally, involved in the maintenance of the Golgi structure. May play a role in hematopoiesis. This is Protein YIPF3 (yipf3) from Xenopus laevis (African clawed frog).